A 193-amino-acid chain; its full sequence is dCTP deaminase, dUMP-forming (193 aa).

DCTP contacts are provided by residues 101–106 (KSSLGR), Asp-119, 127–129 (TLE), Gln-148, Tyr-162, and Gln-174. The Proton donor/acceptor role is filled by Glu-129. The interval 161-184 (PYGSETTGSHYQGQRGPTPSRSYQ) is disordered.

The protein belongs to the dCTP deaminase family. In terms of assembly, homotrimer.

It catalyses the reaction dCTP + 2 H2O = dUMP + NH4(+) + diphosphate. It participates in pyrimidine metabolism; dUMP biosynthesis; dUMP from dCTP: step 1/1. Its function is as follows. Bifunctional enzyme that catalyzes both the deamination of dCTP to dUTP and the hydrolysis of dUTP to dUMP without releasing the toxic dUTP intermediate. This is dCTP deaminase, dUMP-forming from Bifidobacterium animalis subsp. lactis (strain AD011).